An 84-amino-acid chain; its full sequence is ICP35 (84 aa).

The sequence is that of ICP35 from Crustacea (WSSV).